Reading from the N-terminus, the 899-residue chain is Translation initiation factor IF-2 (899 aa).

2 disordered regions span residues 94-167 (TFTK…VVVK) and 259-309 (FNQE…HGFE). Positions 107-121 (AKARQETEERTRPQE) are enriched in basic and acidic residues. Residues 147–164 (RAAQQKETAKTTSTTTEV) are compositionally biased toward low complexity. The tr-type G domain occupies 399–568 (TRPPVVTIMG…LIQSELMELK (170 aa)). The interval 408 to 415 (GHVDHGKT) is G1. 408 to 415 (GHVDHGKT) contacts GTP. The G2 stretch occupies residues 433 to 437 (GITQH). Residues 454–457 (DTPG) are G3. GTP contacts are provided by residues 454–458 (DTPGH) and 508–511 (NKMD). Residues 508-511 (NKMD) form a G4 region. A G5 region spans residues 544 to 546 (SAH).

This sequence belongs to the TRAFAC class translation factor GTPase superfamily. Classic translation factor GTPase family. IF-2 subfamily.

Its subcellular location is the cytoplasm. In terms of biological role, one of the essential components for the initiation of protein synthesis. Protects formylmethionyl-tRNA from spontaneous hydrolysis and promotes its binding to the 30S ribosomal subunits. Also involved in the hydrolysis of GTP during the formation of the 70S ribosomal complex. The protein is Translation initiation factor IF-2 of Acinetobacter baylyi (strain ATCC 33305 / BD413 / ADP1).